The chain runs to 246 residues: 4-hydroxy-tetrahydrodipicolinate reductase (246 aa).

7–12 (GCSGRM) contributes to the NAD(+) binding site. Arg34 serves as a coordination point for NADP(+). NAD(+) contacts are provided by residues 76–78 (ATT) and 102–105 (CPNT). Catalysis depends on His135, which acts as the Proton donor/acceptor. (S)-2,3,4,5-tetrahydrodipicolinate is bound at residue His136. Lys139 acts as the Proton donor in catalysis. Residue 145-146 (GT) coordinates (S)-2,3,4,5-tetrahydrodipicolinate.

It belongs to the DapB family.

The protein localises to the cytoplasm. The enzyme catalyses (S)-2,3,4,5-tetrahydrodipicolinate + NAD(+) + H2O = (2S,4S)-4-hydroxy-2,3,4,5-tetrahydrodipicolinate + NADH + H(+). It catalyses the reaction (S)-2,3,4,5-tetrahydrodipicolinate + NADP(+) + H2O = (2S,4S)-4-hydroxy-2,3,4,5-tetrahydrodipicolinate + NADPH + H(+). It participates in amino-acid biosynthesis; L-lysine biosynthesis via DAP pathway; (S)-tetrahydrodipicolinate from L-aspartate: step 4/4. Catalyzes the conversion of 4-hydroxy-tetrahydrodipicolinate (HTPA) to tetrahydrodipicolinate. The polypeptide is 4-hydroxy-tetrahydrodipicolinate reductase (Chlamydia caviae (strain ATCC VR-813 / DSM 19441 / 03DC25 / GPIC) (Chlamydophila caviae)).